A 348-amino-acid chain; its full sequence is Phospho-2-dehydro-3-deoxyheptonate aldolase, Trp-sensitive (348 aa).

Belongs to the class-I DAHP synthase family.

It catalyses the reaction D-erythrose 4-phosphate + phosphoenolpyruvate + H2O = 7-phospho-2-dehydro-3-deoxy-D-arabino-heptonate + phosphate. It functions in the pathway metabolic intermediate biosynthesis; chorismate biosynthesis; chorismate from D-erythrose 4-phosphate and phosphoenolpyruvate: step 1/7. In terms of biological role, stereospecific condensation of phosphoenolpyruvate (PEP) and D-erythrose-4-phosphate (E4P) giving rise to 3-deoxy-D-arabino-heptulosonate-7-phosphate (DAHP). This chain is Phospho-2-dehydro-3-deoxyheptonate aldolase, Trp-sensitive (aroH), found in Salmonella typhi.